The chain runs to 154 residues: uncharacterized protein (154 aa).

It is found in the mitochondrion. This is an uncharacterized protein from Marchantia polymorpha (Common liverwort).